The primary structure comprises 141 residues: Large ribosomal subunit protein uL16 (141 aa).

The interval 1 to 23 (MLMPKRTKYRKQMKGRNRGKAHR) is disordered.

It belongs to the universal ribosomal protein uL16 family. Part of the 50S ribosomal subunit.

Functionally, binds 23S rRNA and is also seen to make contacts with the A and possibly P site tRNAs. This is Large ribosomal subunit protein uL16 from Helicobacter acinonychis (strain Sheeba).